Reading from the N-terminus, the 1016-residue chain is Formate dehydrogenase-O major subunit (1016 aa).

The tat-type signal signal peptide spans 1–33 (MQVSRRQFFKICAGGMAGTTAAALGFAPSVALA). Positions 43-106 (TRETRNTCTY…GLVDFIHSES (64 aa)) constitute a 4Fe-4S Mo/W bis-MGD-type domain. Cys50, Cys53, Cys57, and Cys92 together coordinate [4Fe-4S] cluster. A non-standard amino acid (selenocysteine) is located at residue Sec196.

It belongs to the prokaryotic molybdopterin-containing oxidoreductase family. Formate dehydrogenase is a membrane-bound complex, formed by subunits alpha, beta and gamma. Requires Mo-bis(molybdopterin guanine dinucleotide) as cofactor. [4Fe-4S] cluster is required as a cofactor. In terms of processing, exported by the Tat system. The position of the signal peptide cleavage has not been experimentally proven.

Its subcellular location is the periplasm. The catalysed reaction is formate + NAD(+) = CO2 + NADH. Functionally, allows to use formate as major electron donor during aerobic respiration. Subunit alpha possibly forms the active site. The polypeptide is Formate dehydrogenase-O major subunit (fdoG) (Escherichia coli (strain K12)).